Consider the following 183-residue polypeptide: UPF0098 protein YbcL (183 aa).

The signal sequence occupies residues 1–21; it reads MKTLIVSTVLAFITFSAQAAA. C46 and C129 form a disulfide bridge.

Belongs to the UPF0098 family. As to quaternary structure, homodimer.

The protein localises to the periplasm. The polypeptide is UPF0098 protein YbcL (ybcL) (Escherichia coli (strain K12)).